A 101-amino-acid polypeptide reads, in one-letter code: Venom protein 214 (101 aa).

Residues 1-16 form the signal peptide; sequence MIRYVLVIITCFLVAA.

Post-translationally, contains 3 disulfide bonds. Expressed by the venom gland.

Its subcellular location is the secreted. This chain is Venom protein 214, found in Lychas mucronatus (Chinese swimming scorpion).